We begin with the raw amino-acid sequence, 57 residues long: Large ribosomal subunit protein bL32 (57 aa).

It belongs to the bacterial ribosomal protein bL32 family.

The polypeptide is Large ribosomal subunit protein bL32 (Ureaplasma parvum serovar 3 (strain ATCC 27815 / 27 / NCTC 11736)).